The chain runs to 472 residues: Ras-GEF domain-containing family member 1B (472 aa).

An N-terminal Ras-GEF domain is found at histidine 34–alanine 164. The region spanning aspartate 204–proline 452 is the Ras-GEF domain.

Interacts with CCDC124 during cytokinesis. Interacts with Ras family proteins.

It localises to the early endosome. The protein resides in the late endosome. Its subcellular location is the midbody. Its function is as follows. Guanine nucleotide exchange factor (GEF) with specificity for RAP2A, it doesn't seems to activate other Ras family proteins (in vitro). This is Ras-GEF domain-containing family member 1B (RASGEF1B) from Bos taurus (Bovine).